The chain runs to 211 residues: Large ribosomal subunit protein uL3 (211 aa).

The protein belongs to the universal ribosomal protein uL3 family. In terms of assembly, part of the 50S ribosomal subunit. Forms a cluster with proteins L14 and L19.

Its function is as follows. One of the primary rRNA binding proteins, it binds directly near the 3'-end of the 23S rRNA, where it nucleates assembly of the 50S subunit. The chain is Large ribosomal subunit protein uL3 from Geobacter sp. (strain M21).